Here is a 78-residue protein sequence, read N- to C-terminus: Small ribosomal subunit protein uS17 (78 aa).

It belongs to the universal ribosomal protein uS17 family. Part of the 30S ribosomal subunit.

Functionally, one of the primary rRNA binding proteins, it binds specifically to the 5'-end of 16S ribosomal RNA. The polypeptide is Small ribosomal subunit protein uS17 (Allorhizobium ampelinum (strain ATCC BAA-846 / DSM 112012 / S4) (Agrobacterium vitis (strain S4))).